Reading from the N-terminus, the 79-residue chain is Dicentracin (79 aa).

Positions 1–22 (MKCATLFLVLSMVVLMAEPGDA) are cleaved as a signal peptide. At Gly-44 the chain carries Glycine amide. The propeptide occupies 47–79 (AQQDQQDQQYQQDQQDQQAEQYQRFNRERAAFD). Residues 48–67 (QQDQQDQQYQQDQQDQQAEQ) are disordered.

The protein belongs to the pleurocidin family.

The protein resides in the secreted. In Dicentrarchus labrax (European seabass), this protein is Dicentracin.